A 37-amino-acid chain; its full sequence is Large ribosomal subunit protein bL36 (37 aa).

It belongs to the bacterial ribosomal protein bL36 family.

The protein is Large ribosomal subunit protein bL36 of Helicobacter pylori (strain ATCC 700392 / 26695) (Campylobacter pylori).